The following is a 250-amino-acid chain: 1-(5-phosphoribosyl)-5-[(5-phosphoribosylamino)methylideneamino] imidazole-4-carboxamide isomerase (250 aa).

D8 serves as the catalytic Proton acceptor. D129 serves as the catalytic Proton donor.

The protein belongs to the HisA/HisF family.

It is found in the cytoplasm. It carries out the reaction 1-(5-phospho-beta-D-ribosyl)-5-[(5-phospho-beta-D-ribosylamino)methylideneamino]imidazole-4-carboxamide = 5-[(5-phospho-1-deoxy-D-ribulos-1-ylimino)methylamino]-1-(5-phospho-beta-D-ribosyl)imidazole-4-carboxamide. It participates in amino-acid biosynthesis; L-histidine biosynthesis; L-histidine from 5-phospho-alpha-D-ribose 1-diphosphate: step 4/9. The sequence is that of 1-(5-phosphoribosyl)-5-[(5-phosphoribosylamino)methylideneamino] imidazole-4-carboxamide isomerase from Desulfovibrio desulfuricans (strain ATCC 27774 / DSM 6949 / MB).